The sequence spans 618 residues: Proline--tRNA ligase (618 aa).

This sequence belongs to the class-II aminoacyl-tRNA synthetase family. ProS type 1 subfamily. In terms of assembly, homodimer.

It localises to the cytoplasm. It catalyses the reaction tRNA(Pro) + L-proline + ATP = L-prolyl-tRNA(Pro) + AMP + diphosphate. Catalyzes the attachment of proline to tRNA(Pro) in a two-step reaction: proline is first activated by ATP to form Pro-AMP and then transferred to the acceptor end of tRNA(Pro). As ProRS can inadvertently accommodate and process non-cognate amino acids such as alanine and cysteine, to avoid such errors it has two additional distinct editing activities against alanine. One activity is designated as 'pretransfer' editing and involves the tRNA(Pro)-independent hydrolysis of activated Ala-AMP. The other activity is designated 'posttransfer' editing and involves deacylation of mischarged Ala-tRNA(Pro). The misacylated Cys-tRNA(Pro) is not edited by ProRS. The polypeptide is Proline--tRNA ligase (Streptococcus pyogenes serotype M28 (strain MGAS6180)).